Reading from the N-terminus, the 170-residue chain is Lipoprotein signal peptidase (170 aa).

The next 3 helical transmembrane spans lie at 12 to 32, 67 to 87, and 94 to 113; these read WYWV…WVLS, WQRW…SVWL, and MWRL…GNLI. Catalysis depends on residues Asp123 and Asp141. Residues 139–159 form a helical membrane-spanning segment; it reads IADSAICVGAGLIILDSFVAG.

This sequence belongs to the peptidase A8 family.

It is found in the cell inner membrane. It catalyses the reaction Release of signal peptides from bacterial membrane prolipoproteins. Hydrolyzes -Xaa-Yaa-Zaa-|-(S,diacylglyceryl)Cys-, in which Xaa is hydrophobic (preferably Leu), and Yaa (Ala or Ser) and Zaa (Gly or Ala) have small, neutral side chains.. It participates in protein modification; lipoprotein biosynthesis (signal peptide cleavage). Functionally, this protein specifically catalyzes the removal of signal peptides from prolipoproteins. This Shewanella pealeana (strain ATCC 700345 / ANG-SQ1) protein is Lipoprotein signal peptidase.